Reading from the N-terminus, the 90-residue chain is Cell division topological specificity factor (90 aa).

The disordered stretch occupies residues 1 to 21 (MAGFWSKLFSSEEKPSSAQTA). Positions 10–21 (SSEEKPSSAQTA) are enriched in basic and acidic residues.

This sequence belongs to the MinE family.

In terms of biological role, prevents the cell division inhibition by proteins MinC and MinD at internal division sites while permitting inhibition at polar sites. This ensures cell division at the proper site by restricting the formation of a division septum at the midpoint of the long axis of the cell. The sequence is that of Cell division topological specificity factor from Acinetobacter baumannii (strain AB307-0294).